The primary structure comprises 359 residues: MSLSAGLPVRPLLLLLLLLWSVAPQALPPRSHSLRYLFMGASEPDLGLPLFEARGYVDDQLFVSYNHESRRAEPRAPWILEQTSSQLWLHLSQSLKGWDYMFIVDFWTIMGNYNHSKVTKLGVVSESHILQVVLGCEVHEDNSTSGFWRYGYDGQDHLEFCPKTLNWSAAEPGAWATKVEWDEHKIRAKQNRDYLEKDCPEQLKRLLELGRGVLGQQVPTLVKVTRHWASTGTSLRCQALDFFPQNITMRWLKDNQPLDAKDVNPEKVLPNGDETYQGWLTLAVAPGDETRFTCQVEHPGLDQPLTASWEPLQSQAMIIGIISGVTVCAIFLVGILFLILRKRKASGGTMGGYVLTDCE.

An N-terminal signal peptide occupies residues 1 to 24 (MSLSAGLPVRPLLLLLLLLWSVAP). The segment at 25-126 (QALPPRSHSL…KVTKLGVVSE (102 aa)) is alpha-1. Topologically, residues 25-318 (QALPPRSHSL…WEPLQSQAMI (294 aa)) are extracellular. N-linked (GlcNAc...) asparagine glycans are attached at residues asparagine 114, asparagine 142, asparagine 166, and asparagine 246. The tract at residues 127–217 (SHILQVVLGC…ELGRGVLGQQ (91 aa)) is alpha-2. 2 disulfides stabilise this stretch: cysteine 136/cysteine 199 and cysteine 237/cysteine 294. The segment at 218-309 (VPTLVKVTRH…GLDQPLTASW (92 aa)) is alpha-3. One can recognise an Ig-like C1-type domain in the interval 219-308 (PTLVKVTRHW…PGLDQPLTAS (90 aa)). Residues 310 to 318 (EPLQSQAMI) are connecting peptide. Residues 319 to 339 (IGIISGVTVCAIFLVGILFLI) form a helical membrane-spanning segment. Residues 340 to 359 (LRKRKASGGTMGGYVLTDCE) lie on the Cytoplasmic side of the membrane.

Belongs to the MHC class I family. In terms of assembly, binds TFR through the extracellular domain in a pH-dependent manner.

It localises to the cell membrane. In terms of biological role, binds to transferrin receptor (TFR) and reduces its affinity for iron-loaded transferrin. The sequence is that of Hereditary hemochromatosis protein homolog (Hfe) from Mus musculus (Mouse).